An 861-amino-acid polypeptide reads, in one-letter code: MGEVTAEQVEKFLDSNIIFAKQYYNLRYRAKVISDMLGAKEAAVDFSNYHSLSSVEESEIIFDLLRDFQENLQAERCIFNVMKKLCFLLQADRMSLFMYRVRNGIAELATRLFNVHKDAVLEECLVAPDSEIVFPLDMGVVGHVAHSKKIANVVNTEEDEHFCDFVDTLTEYQTKNILASPIMNGKDVVAVIMAVNKVDEPHFTKRDEEILLKYLNFANLIMKVYHLSYLHNCETRRGQILLWSGSKVFEELTDIERQFHKALYTVRAFLNCDRYSVGLLDMTKQKEFFDVWPVLMGEAPPYSGPRTPDGREINFYKVIDYILHGKEDIKVIPNPPPDHWALVSGLPTYVAQNGLICNIMNAPAEDFFAFQKEPLDESGWMIKNVLSMPIVNKKEEIVGVATFYNRKDGKPFDEMDETLMESLAQFLGWSVLNPDTYESMNRLENRKDIFQDMVKYHVKCDNEEIQKILKTREVYGKEPWECEEEELAEILQGELPDAEKYEINKFHFSDLPLTELELVKCGIQMYYELKVVDKFHIPQEALVRFMYSLSKGYRRITYHNWRHGFNVGQTMFSLLVTGKLKRYFTDLEALAMVTAAFCHDIDHRGTNNLYQMKSQNPLAKLHGSSILERHHLEFGKTLLRDESLNIFQNLNRRQHEHAIHMMDIAIIATDLALYFKKRTMFQKIVDQSKTYETQQEWTQYMMLEQTRKEIVMAMMMTACDLSAITKPWEVQSKVALLVAAEFWEQGDLERTVLQQNPIPMMDRNKADELPKLQVGFIDFVCTFVYKEFSRFHEEITPMLDGITNNRKEWKALADEYDTKMKALEEEKQKQQTAKQGAAGDQPGGNPSPAGGAPASKSCCIQ.

At G2 the chain carries N-acetylglycine. GAF domains are found at residues Q73–M222 and D254–V431. The region spanning E483–Y816 is the PDEase domain. H559 serves as the catalytic Proton donor. Positions 563, 599, 600, and 720 each coordinate a divalent metal cation. A disordered region spans residues K821–Q861. Low complexity predominate over residues Q830–Q861. C858 carries the post-translational modification Cysteine methyl ester. A lipid anchor (S-farnesyl cysteine) is attached at C858. A propeptide spans C859–Q861 (removed in mature form).

This sequence belongs to the cyclic nucleotide phosphodiesterase family. In terms of assembly, oligomer composed of two catalytic chains (alpha and beta), an inhibitory chain (gamma) and the delta chain. The cofactor is a divalent metal cation.

The protein localises to the cell membrane. It localises to the cell projection. Its subcellular location is the cilium. The protein resides in the photoreceptor outer segment. It catalyses the reaction 3',5'-cyclic GMP + H2O = GMP + H(+). Functionally, rod-specific cGMP phosphodiesterase that catalyzes the hydrolysis of 3',5'-cyclic GMP. This protein participates in processes of transmission and amplification of the visual signal. The protein is Rod cGMP-specific 3',5'-cyclic phosphodiesterase subunit alpha of Canis lupus familiaris (Dog).